We begin with the raw amino-acid sequence, 202 residues long: Oocyte-secreted protein 1 (202 aa).

The first 21 residues, 1–21, serve as a signal peptide directing secretion; that stretch reads MKPFVGLLGLLLLLSFMKTCA. The disordered stretch occupies residues 157-183; that stretch reads QPNLSTSSEDHHVSTEPWASETSRSEA.

This sequence belongs to the PLAC1 family. In terms of tissue distribution, expressed in oocytes in primary through antral-stage follicles. Expressed in liver and ovary.

Its subcellular location is the secreted. May be involved in cell differentiation. In Mus musculus (Mouse), this protein is Oocyte-secreted protein 1 (Oosp1).